We begin with the raw amino-acid sequence, 362 residues long: Phenylalanine--tRNA ligase alpha subunit (362 aa).

A Mg(2+)-binding site is contributed by glutamate 263.

It belongs to the class-II aminoacyl-tRNA synthetase family. Phe-tRNA synthetase alpha subunit type 1 subfamily. In terms of assembly, tetramer of two alpha and two beta subunits. The cofactor is Mg(2+).

The protein localises to the cytoplasm. It catalyses the reaction tRNA(Phe) + L-phenylalanine + ATP = L-phenylalanyl-tRNA(Phe) + AMP + diphosphate + H(+). This chain is Phenylalanine--tRNA ligase alpha subunit, found in Caulobacter sp. (strain K31).